We begin with the raw amino-acid sequence, 371 residues long: Probable alcohol acetyltransferase (371 aa).

Catalysis depends on charge relay system residues serine 124 and histidine 295. The segment at 325–352 (AKALEESPKESYSRPPAHQQPLHKNDFT) is disordered. The segment covering 327 to 336 (ALEESPKESY) has biased composition (basic and acidic residues).

Belongs to the AB hydrolase superfamily.

In terms of biological role, probable alcohol acetyltransferase that uses acetyl-CoA to synthesize acetate esters from various alcohols. Not involved in the synthesis of ethyl acetate. The sequence is that of Probable alcohol acetyltransferase (EAT2) from Cyberlindnera fabianii (Yeast).